Here is a 433-residue protein sequence, read N- to C-terminus: Enolase (433 aa).

Position 167 (Q167) interacts with (2R)-2-phosphoglycerate. The Proton donor role is filled by E209. D246, E291, and D318 together coordinate Mg(2+). (2R)-2-phosphoglycerate-binding residues include K343, R372, S373, and K394. K343 acts as the Proton acceptor in catalysis.

It belongs to the enolase family. In terms of assembly, component of the RNA degradosome, a multiprotein complex involved in RNA processing and mRNA degradation. Mg(2+) serves as cofactor.

Its subcellular location is the cytoplasm. The protein localises to the secreted. It is found in the cell surface. The catalysed reaction is (2R)-2-phosphoglycerate = phosphoenolpyruvate + H2O. Its pathway is carbohydrate degradation; glycolysis; pyruvate from D-glyceraldehyde 3-phosphate: step 4/5. Its function is as follows. Catalyzes the reversible conversion of 2-phosphoglycerate (2-PG) into phosphoenolpyruvate (PEP). It is essential for the degradation of carbohydrates via glycolysis. The polypeptide is Enolase (Aeromonas salmonicida (strain A449)).